A 533-amino-acid polypeptide reads, in one-letter code: uncharacterized protein (533 aa).

Positions 1 to 26 are disordered; the sequence is MKRFFSKLFSKSPTSGRVPSPDSDYS. A phosphoserine mark is found at Ser-20 and Ser-23. A Phosphotyrosine modification is found at Tyr-25. Phosphoserine is present on Ser-26. Helical transmembrane passes span 178-198, 213-230, 242-264, 274-296, 313-333, 353-373, 394-414, 435-455, 466-486, and 495-515; these read ILAV…HILI, YMRV…FEAL, PITY…LVWH, APVA…ICFS, LSPM…EWAA, SILL…AVAS, RVAY…IFCF, IFPI…GGGL, GLIS…FVVV, and IWCG…TVLF.

It belongs to the multi antimicrobial extrusion (MATE) (TC 2.A.66.1) family.

The protein resides in the vacuole membrane. This is an uncharacterized protein from Schizosaccharomyces pombe (strain 972 / ATCC 24843) (Fission yeast).